A 69-amino-acid chain; its full sequence is DNA-directed RNA polymerase subunit omega (69 aa).

Belongs to the RNA polymerase subunit omega family. In terms of assembly, the RNAP catalytic core consists of 2 alpha, 1 beta, 1 beta' and 1 omega subunit. When a sigma factor is associated with the core the holoenzyme is formed, which can initiate transcription.

The enzyme catalyses RNA(n) + a ribonucleoside 5'-triphosphate = RNA(n+1) + diphosphate. Its function is as follows. Promotes RNA polymerase assembly. Latches the N- and C-terminal regions of the beta' subunit thereby facilitating its interaction with the beta and alpha subunits. The polypeptide is DNA-directed RNA polymerase subunit omega (Carboxydothermus hydrogenoformans (strain ATCC BAA-161 / DSM 6008 / Z-2901)).